The following is a 513-amino-acid chain: Cytochrome P450 71D445 (513 aa).

A helical; Signal-anchor for type II membrane protein membrane pass occupies residues 12 to 28; sequence SEWAITSTITLLFLILL. C450 serves as a coordination point for heme.

It belongs to the cytochrome P450 family. It depends on heme as a cofactor. As to expression, expressed in mature seeds.

Its subcellular location is the membrane. It carries out the reaction (-)-casbene + reduced [NADPH--hemoprotein reductase] + O2 = 8-hydroxycasbene + oxidized [NADPH--hemoprotein reductase] + H2O + H(+). The catalysed reaction is 4-hydroxycasbene + reduced [NADPH--hemoprotein reductase] + O2 = 4,8-dihydroxycasbene + oxidized [NADPH--hemoprotein reductase] + H2O + H(+). The enzyme catalyses 4,8-dihydroxycasbene + reduced [NADPH--hemoprotein reductase] + O2 = 4,5,8-trihydroxycasbene + oxidized [NADPH--hemoprotein reductase] + H2O + H(+). The protein operates within secondary metabolite biosynthesis; terpenoid biosynthesis. Functionally, involved in the biosynthesis of macrocyclic lathyrane type diterpenoids (also called Euphorbia factors) natural products, including the cyclization route from casbene to jolkinol C, a precursor for ingenol mebutate that is used to treat actinic keratosis, a precancerous skin condition. Catalyzes the hydroxylation of (-)-casbene and 4-hydroxycasbene to produce 8-hydroxycasbene and 4,8-dihydroxycasbene, respectively. Also mediates the formation of 4-hydroxy-8-ketocasbene from 4,8-dihydroxycasbene. Together with ADH1, triggers the biosynthesis of 8-ketocasbene from 8-hydroxycasbene. This chain is Cytochrome P450 71D445, found in Euphorbia lathyris (Caper spurge).